The chain runs to 269 residues: Regulating synaptic membrane exocytosis protein 4 (269 aa).

The 119-residue stretch at 115 to 233 (PMGDVEIGLQ…DLTTLAVGWY (119 aa)) folds into the C2 domain. 2 positions are modified to phosphoserine: Ser-254 and Ser-257.

As to quaternary structure, binds PPFIA3. Does not bind RAB3.

It is found in the synapse. Its function is as follows. Regulates synaptic membrane exocytosis. This Homo sapiens (Human) protein is Regulating synaptic membrane exocytosis protein 4 (RIMS4).